Here is a 117-residue protein sequence, read N- to C-terminus: Holo-[acyl-carrier-protein] synthase (117 aa).

Residues aspartate 8 and glutamate 58 each contribute to the Mg(2+) site.

Belongs to the P-Pant transferase superfamily. AcpS family. It depends on Mg(2+) as a cofactor.

The protein resides in the cytoplasm. The catalysed reaction is apo-[ACP] + CoA = holo-[ACP] + adenosine 3',5'-bisphosphate + H(+). Its function is as follows. Transfers the 4'-phosphopantetheine moiety from coenzyme A to a Ser of acyl-carrier-protein. The sequence is that of Holo-[acyl-carrier-protein] synthase from Shouchella clausii (strain KSM-K16) (Alkalihalobacillus clausii).